A 645-amino-acid chain; its full sequence is Translation factor GUF1, mitochondrial (645 aa).

The tr-type G domain maps to 44-228 (ENYRNFSIVA…AIIDRIPPPT (185 aa)). GTP-binding positions include 53 to 60 (AHVDHGKS), 120 to 124 (DTPGH), and 174 to 177 (NKID).

This sequence belongs to the TRAFAC class translation factor GTPase superfamily. Classic translation factor GTPase family. LepA subfamily.

The protein localises to the mitochondrion inner membrane. The catalysed reaction is GTP + H2O = GDP + phosphate + H(+). Its function is as follows. Promotes mitochondrial protein synthesis. May act as a fidelity factor of the translation reaction, by catalyzing a one-codon backward translocation of tRNAs on improperly translocated ribosomes. Binds to mitochondrial ribosomes in a GTP-dependent manner. The sequence is that of Translation factor GUF1, mitochondrial from Saccharomyces cerevisiae (strain ATCC 204508 / S288c) (Baker's yeast).